The following is a 424-amino-acid chain: Enolase (424 aa).

Residue Gln165 participates in (2R)-2-phosphoglycerate binding. The active-site Proton donor is Glu207. Asp244, Glu283, and Asp310 together coordinate Mg(2+). Residues Lys335, Arg364, Ser365, and Lys386 each coordinate (2R)-2-phosphoglycerate. Catalysis depends on Lys335, which acts as the Proton acceptor.

It belongs to the enolase family. It depends on Mg(2+) as a cofactor.

Its subcellular location is the cytoplasm. It is found in the secreted. It localises to the cell surface. The catalysed reaction is (2R)-2-phosphoglycerate = phosphoenolpyruvate + H2O. The protein operates within carbohydrate degradation; glycolysis; pyruvate from D-glyceraldehyde 3-phosphate: step 4/5. Its function is as follows. Catalyzes the reversible conversion of 2-phosphoglycerate (2-PG) into phosphoenolpyruvate (PEP). It is essential for the degradation of carbohydrates via glycolysis. This is Enolase from Chlamydia muridarum (strain MoPn / Nigg).